Here is a 330-residue protein sequence, read N- to C-terminus: Ferredoxin--NADP reductase (330 aa).

FAD is bound by residues Glu-35, Gln-43, Tyr-48, Val-90, Phe-123, Asp-285, and Thr-326.

Belongs to the ferredoxin--NADP reductase type 2 family. In terms of assembly, homodimer. FAD is required as a cofactor.

The enzyme catalyses 2 reduced [2Fe-2S]-[ferredoxin] + NADP(+) + H(+) = 2 oxidized [2Fe-2S]-[ferredoxin] + NADPH. The chain is Ferredoxin--NADP reductase from Streptococcus pyogenes serotype M6 (strain ATCC BAA-946 / MGAS10394).